Consider the following 827-residue polypeptide: Penicillin-binding protein 1A (827 aa).

The Cytoplasmic segment spans residues 1–18 (MGKKKKKRKSSAFKIILN). The chain crosses the membrane as a helical; Signal-anchor for type II membrane protein span at residues 19–39 (VFLSIFLVAGVAFGGIVFAMI). The Extracellular portion of the chain corresponds to 40–827 (KTAPPLNVQQ…QNHEDNKNKQ (788 aa)). The interval 57–229 (SILYDDKGQY…PSVYYPYSSA (173 aa)) is transglycosylase. Residue glutamate 96 is the Proton donor; for transglycosylase activity of the active site. The transpeptidase stretch occupies residues 357 to 641 (ASAVIMDYHN…AARLWGDIMK (285 aa)). Serine 398 (acyl-ester intermediate; for transpeptidase activity) is an active-site residue. A disordered region spans residues 755–827 (GSLPPTEEKN…QNHEDNKNKQ (73 aa)). Over residues 760 to 790 (TEEKNNSNTRDKNKDKNKDKDKNKNKDKNPS) the composition is skewed to basic and acidic residues. A compositionally biased stretch (low complexity) spans 791–817 (QDKPNNNNNNNNNDNNNNTKPPENDSN). Basic and acidic residues predominate over residues 818 to 827 (QNHEDNKNKQ).

This sequence in the N-terminal section; belongs to the glycosyltransferase 51 family. The protein in the C-terminal section; belongs to the transpeptidase family.

It localises to the cell membrane. It carries out the reaction [GlcNAc-(1-&gt;4)-Mur2Ac(oyl-L-Ala-gamma-D-Glu-L-Lys-D-Ala-D-Ala)](n)-di-trans,octa-cis-undecaprenyl diphosphate + beta-D-GlcNAc-(1-&gt;4)-Mur2Ac(oyl-L-Ala-gamma-D-Glu-L-Lys-D-Ala-D-Ala)-di-trans,octa-cis-undecaprenyl diphosphate = [GlcNAc-(1-&gt;4)-Mur2Ac(oyl-L-Ala-gamma-D-Glu-L-Lys-D-Ala-D-Ala)](n+1)-di-trans,octa-cis-undecaprenyl diphosphate + di-trans,octa-cis-undecaprenyl diphosphate + H(+). The enzyme catalyses Preferential cleavage: (Ac)2-L-Lys-D-Ala-|-D-Ala. Also transpeptidation of peptidyl-alanyl moieties that are N-acyl substituents of D-alanine.. The protein operates within cell wall biogenesis; peptidoglycan biosynthesis. Functionally, cell wall formation. Synthesis of cross-linked peptidoglycan from the lipid intermediates. The enzyme has a penicillin-insensitive transglycosylase N-terminal domain (formation of linear glycan strands) and a penicillin-sensitive transpeptidase C-terminal domain (cross-linking of the peptide subunits). The polypeptide is Penicillin-binding protein 1A (pbpA) (Clostridium botulinum (strain Langeland / NCTC 10281 / Type F)).